We begin with the raw amino-acid sequence, 494 residues long: Protein DETOXIFICATION 23 (494 aa).

Positions 1–25 are disordered; the sequence is MARREGEVTETLLKKSTENRGEDRD. 12 helical membrane-spanning segments follow: residues 40-60, 74-94, 123-143, 158-178, 188-208, 223-243, 268-288, 297-317, 340-360, 384-404, 416-436, and 441-461; these read LWVV…LSLI, AAYS…LLGM, IVLT…GPIL, IIAL…TCQM, IIAY…WLLV, LVAH…GGCT, GGMI…TGNL, ALAI…GFMA, MVVV…FLFL, LLAF…VAVG, LACY…VVGL, and VWLG…VMTM.

The protein belongs to the multi antimicrobial extrusion (MATE) (TC 2.A.66.1) family.

The protein localises to the membrane. In Arabidopsis thaliana (Mouse-ear cress), this protein is Protein DETOXIFICATION 23.